Consider the following 577-residue polypeptide: Acyl-coenzyme A synthetase ACSM2A, mitochondrial (577 aa).

A mitochondrion-targeting transit peptide spans 1–46 (MHWLRKVQGLCTLWGTQMSSRTLYINSRQLVSLQWGHQEVPAKFNF). Gln139 provides a ligand contact to CoA. Residues 221 to 229 (TSGTSGLPK), 359 to 364 (ESYGQT), Asp446, and Arg461 each bind ATP. Thr364 is a substrate binding site. 469–471 (SGY) contacts CoA. Substrate is bound at residue Arg472. Arg501 lines the CoA pocket. Ser513 is subject to Phosphoserine. CoA contacts are provided by residues Lys532 and 540–542 (YPR). An ATP-binding site is contributed by Lys557.

It belongs to the ATP-dependent AMP-binding enzyme family. In terms of assembly, monomer. The cofactor is Mg(2+). It depends on Mn(2+) as a cofactor.

The protein resides in the mitochondrion. The catalysed reaction is a medium-chain fatty acid + ATP + CoA = a medium-chain fatty acyl-CoA + AMP + diphosphate. It carries out the reaction benzoate + ATP + CoA = benzoyl-CoA + AMP + diphosphate. It catalyses the reaction hexanoate + ATP + CoA = hexanoyl-CoA + AMP + diphosphate. The enzyme catalyses butanoate + ATP + CoA = butanoyl-CoA + AMP + diphosphate. The catalysed reaction is octanoate + ATP + CoA = octanoyl-CoA + AMP + diphosphate. It carries out the reaction decanoate + ATP + CoA = decanoyl-CoA + AMP + diphosphate. In terms of biological role, catalyzes the activation of fatty acids by CoA to produce an acyl-CoA, the first step in fatty acid metabolism. Capable of activating medium-chain fatty acids (e.g. butyric (C4) to decanoic (C10) acids), and certain carboxylate-containing xenobiotics, e.g. benzoate. In Homo sapiens (Human), this protein is Acyl-coenzyme A synthetase ACSM2A, mitochondrial (ACSM2A).